The following is a 147-amino-acid chain: Hemoglobin subunit beta (147 aa).

An N-acetylvaline modification is found at valine 2. A Globin domain is found at 3-147; that stretch reads HLSGEEKSAV…VANALAHKYH (145 aa). Position 13 is a phosphothreonine (threonine 13). Serine 45 carries the phosphoserine modification. Lysine 60 is modified (N6-acetyllysine). Histidine 64 contacts heme b. Lysine 83 is subject to N6-acetyllysine. Residue histidine 93 coordinates heme b. Cysteine 94 bears the S-nitrosocysteine mark. Residue lysine 145 is modified to N6-acetyllysine.

The protein belongs to the globin family. As to quaternary structure, heterotetramer of two alpha chains and two beta chains. Red blood cells.

In terms of biological role, involved in oxygen transport from the lung to the various peripheral tissues. The chain is Hemoglobin subunit beta (HBB) from Lepus europaeus (European hare).